The chain runs to 200 residues: TATA-box-binding protein 2 (200 aa).

Tandem repeats lie at residues Leu-25 to Val-101 and Ile-115 to Leu-192.

The protein belongs to the TBP family. As to quaternary structure, belongs to the TFIID complex together with the TBP-associated factors (TAFs). Binds DNA as monomer. Interacts with TAF1 (via N-terminus). Interacts with TFIIB1. Interacts with PTF2. Interacts with HAT5/ATHB-1 and ATHB-7. Component of a nuclear protein complex containing at least TATA binding proteins (TBPs, e.g. TBP1 and TBP2) and ATX1.

The protein localises to the nucleus. In terms of biological role, general transcription factor (GTF) that functions at the core of the DNA-binding multiprotein factor TFIID. Binding of TFIID to the TATA box is the initial transcriptional step of the pre-initiation complex (PIC), playing a role in the activation of eukaryotic genes transcribed by RNA polymerase II. Interacts with TFIIB1 and is required for activated transcription and possibly basal transcription. May act as GTF of RNA polymerase I-dependent transcription and rRNA synthesis. Forms a ternary complex with PBRP1 and the rDNA promoter region. The chain is TATA-box-binding protein 2 from Arabidopsis thaliana (Mouse-ear cress).